Here is a 2523-residue protein sequence, read N- to C-terminus: Non-reducing polyketide synthase Preu3 (2523 aa).

Residues 58-247 are N-terminal acylcarrier protein transacylase domain (SAT); that stretch reads LQSLASERRA…KILAMTGSFH (190 aa). The Ketosynthase family 3 (KS3) domain occupies 373–792; the sequence is DNAVAVVGMA…GSNGAMIVCQ (420 aa). Catalysis depends on for beta-ketoacyl synthase activity residues C539, H674, and H715. The interval 900–1207 is malonyl-CoA:ACP transacylase (MAT) domain; sequence CFGGQVKAFV…KAFGSLADAT (308 aa). S986 functions as the For acyl/malonyl transferase activity in the catalytic mechanism. The segment at 1271 to 1398 is N-terminal hotdog fold; sequence HELLTFSSFE…GLVAFGGTVE (128 aa). Residues 1271–1573 enclose the PKS/mFAS DH domain; that stretch reads HELLTFSSFE…FTRVTVPGLR (303 aa). Residues 1301-1568 form a product template (PT) domain region; the sequence is LVKGHAVVAQ…ALGCRFTRVT (268 aa). Residue H1305 is the Proton acceptor; for dehydratase activity of the active site. Residues 1421–1573 are C-terminal hotdog fold; sequence ECDALRGSAT…FTRVTVPGLR (153 aa). The Proton donor; for dehydratase activity role is filled by D1483. A disordered region spans residues 1579–1601; the sequence is ANGDARAQERPSGSRISPSPLAP. The Carrier domain maps to 1639–1713; that stretch reads VDYLAQVKAL…KLAEYLAKTL (75 aa). An O-(pantetheine 4'-phosphoryl)serine modification is found at S1673. Positions 1735–1757 are disordered; it reads DAEQSSDESPYDSTDDSASGYGD. A compositionally biased stretch (acidic residues) spans 1738–1749; sequence QSSDESPYDSTD. Positions 1986–2085 are methyltransferase (CMeT) domain; the sequence is LEIGGGTGGT…MRQLLSSEGF (100 aa). The tract at residues 2218-2520 is thioesterase (TE) domain; that stretch reads LILHGGGHVL…RALEWLVEQC (303 aa).

It depends on pantetheine 4'-phosphate as a cofactor.

The enzyme catalyses 3 malonyl-CoA + acetyl-CoA + S-adenosyl-L-methionine + H(+) = 3-methylorsellinate + S-adenosyl-L-homocysteine + 3 CO2 + 4 CoA. Functionally, non-reducing polyketide synthase; part of a gene cluster that mediates the biosynthesis of a yet unidentified natural product. The first step in the pathway is performed by Preu3 that condenses one acetyl-CoA starter unit with 3 malonyl-CoA units. Preu3 also catalyzes one methylation step to produce 3-methylorsellinate, an intermediate that exhibits significant antibacterial activities against methicillin-resistant Staphylococcus aureus, multidrug-resistant Enterococcus faecalis, multidrug-resistant Enterococcus faecium, and multidrug-resistant Staphylococcus epidermidis. The chain is Non-reducing polyketide synthase Preu3 from Preussia isomera (Coprophilous fungus).